Consider the following 263-residue polypeptide: Ribosomal RNA small subunit methyltransferase A (263 aa).

S-adenosyl-L-methionine-binding residues include H13, L15, G40, E61, D86, and N105.

It belongs to the class I-like SAM-binding methyltransferase superfamily. rRNA adenine N(6)-methyltransferase family. RsmA subfamily.

The protein localises to the cytoplasm. It carries out the reaction adenosine(1518)/adenosine(1519) in 16S rRNA + 4 S-adenosyl-L-methionine = N(6)-dimethyladenosine(1518)/N(6)-dimethyladenosine(1519) in 16S rRNA + 4 S-adenosyl-L-homocysteine + 4 H(+). In terms of biological role, specifically dimethylates two adjacent adenosines (A1518 and A1519) in the loop of a conserved hairpin near the 3'-end of 16S rRNA in the 30S particle. May play a critical role in biogenesis of 30S subunits. The chain is Ribosomal RNA small subunit methyltransferase A from Dichelobacter nodosus (strain VCS1703A).